A 65-amino-acid polypeptide reads, in one-letter code: Large ribosomal subunit protein bL31 (65 aa).

Zn(2+)-binding residues include C16, C18, C36, and C39.

It belongs to the bacterial ribosomal protein bL31 family. Type A subfamily. Part of the 50S ribosomal subunit. It depends on Zn(2+) as a cofactor.

Its function is as follows. Binds the 23S rRNA. The chain is Large ribosomal subunit protein bL31 from Geobacter sulfurreducens (strain ATCC 51573 / DSM 12127 / PCA).